The following is a 25-amino-acid chain: Omega-conotoxin CVIB (25 aa).

3 cysteine pairs are disulfide-bonded: Cys-1–Cys-16, Cys-8–Cys-20, and Cys-15–Cys-25. Cysteine amide is present on Cys-25.

This sequence belongs to the conotoxin O1 superfamily. Expressed by the venom duct.

The protein localises to the secreted. Its function is as follows. Omega-conotoxins act at presynaptic membranes, they bind and block voltage-gated calcium channels (Cav). This toxin blocks N-, P- and Q-type calcium channels. It shows high activities on Cav2.1/CACNA1A (IC(50)=11 nM) and Cav2.2/CACNA1B (IC(50)=7.7 nM). In addition, it shows a higher potency when Cav2.2/CACNA1B is only expressed with the ancillary subunit CACNB3 (IC(50)=1.6 nM) than on Cav2.2/CACNA1B expressed with the ancillary subunits CACNA2D1 and CACNB3 (IC(50)=12 nM). Both the Cav2.2/CACNA1B block by this toxin and the recovery are voltage-independent. It is noteworthy that ancillary subunits beta do not modulate recovery from this toxin block, since Cav2.2/CACNA1B expressed with either the ancillary subunit CACNB2a (isoform 2a) or with CACNB3 exhibits moderate recovery. The sequence is that of Omega-conotoxin CVIB from Conus catus (Cat cone).